Consider the following 90-residue polypeptide: Probable Fe(2+)-trafficking protein (90 aa).

This sequence belongs to the Fe(2+)-trafficking protein family.

In terms of biological role, could be a mediator in iron transactions between iron acquisition and iron-requiring processes, such as synthesis and/or repair of Fe-S clusters in biosynthetic enzymes. This is Probable Fe(2+)-trafficking protein from Bordetella bronchiseptica (strain ATCC BAA-588 / NCTC 13252 / RB50) (Alcaligenes bronchisepticus).